We begin with the raw amino-acid sequence, 303 residues long: 1-acyl-sn-glycerol-3-phosphate acyltransferase (303 aa).

The short motif at 82 to 87 (HQSTLD) is the HXXXXD motif element. Residues 278–303 (NEPVPSVSISNDVNTHNEGSSVKKMH) are disordered. Polar residues predominate over residues 284 to 297 (VSISNDVNTHNEGS).

Belongs to the 1-acyl-sn-glycerol-3-phosphate acyltransferase family.

It is found in the lipid droplet. The catalysed reaction is a 1-acyl-sn-glycero-3-phosphate + an acyl-CoA = a 1,2-diacyl-sn-glycero-3-phosphate + CoA. The enzyme catalyses a 1-acyl-sn-glycero-3-phosphocholine + an acyl-CoA = a 1,2-diacyl-sn-glycero-3-phosphocholine + CoA. It carries out the reaction a 1-acyl-sn-glycero-3-phosphoethanolamine + an acyl-CoA = a 1,2-diacyl-sn-glycero-3-phosphoethanolamine + CoA. It catalyses the reaction 1-hexadecanoyl-sn-glycero-3-phosphate + (9Z)-octadecenoyl-CoA = 1-hexadecanoyl-2-(9Z-octadecenoyl)-sn-glycero-3-phosphate + CoA. The catalysed reaction is 1-octadecanoyl-sn-glycero-3-phosphate + (9Z)-octadecenoyl-CoA = 1-octadecanoyl-2-(9Z-octadecenoyl)-sn-glycero-3-phosphate + CoA. The enzyme catalyses 1-(9Z-octadecenoyl)-sn-glycero-3-phospho-L-serine + (9Z)-octadecenoyl-CoA = 1,2-di-(9Z)-octadecenoyl-sn-glycero-3-phospho-L-serine + CoA. It carries out the reaction a 1-acyl-sn-glycero-3-phospho-(1D-myo-inositol) + (9Z)-octadecenoyl-CoA = a 1-acyl-2-(9Z-octadecenoyl)-sn-glycero-3-phospho-(1D-myo-inositol) + CoA. It catalyses the reaction 1-heptadecanoyl-sn-glycero-3-phosphate + (9Z)-octadecenoyl-CoA = 1-heptadecanoyl-2-(9Z)-octadecenoyl-sn-glycero-3-phosphate + CoA. The catalysed reaction is 1-heptadecanoyl-sn-glycero-3-phosphate + dodecanoyl-CoA = 1-heptadecanoyl-2-dodecanoyl-sn-glycero-3-phosphate + CoA. The enzyme catalyses 1-heptadecanoyl-sn-glycero-3-phosphate + tetradecanoyl-CoA = 1-heptadecanoyl-2-tetradecanoyl-sn-glycero-3-phosphate + CoA. Its pathway is phospholipid metabolism; CDP-diacylglycerol biosynthesis; CDP-diacylglycerol from sn-glycerol 3-phosphate: step 2/3. Acyltransferase that catalyzes the sn-2-specific, acyl-CoA-dependent acylation of lysophosphatidic acid (LPA) to phosphatidic acid (PA) in lipid particles. Together with ALE1, plays a central role in PA biosynthesis. PA is the intermediate, from which all glycerophospholipids are synthesized. Can also acylate lysophosphoinositol (LPI) and lysophosphoserine (LPS). The fatty acyl substrates include 18:1-acyl-CoA, 14:0-acyl-CoA, 12:0-acyl-CoA and 10:0-acyl-CoA. The sequence is that of 1-acyl-sn-glycerol-3-phosphate acyltransferase from Saccharomyces cerevisiae (strain ATCC 204508 / S288c) (Baker's yeast).